A 404-amino-acid chain; its full sequence is Na(+)/H(+) antiporter NhaA 2 (404 aa).

The next 11 helical transmembrane spans lie at 24–44 (GIILLICAIAAIMIANSSFSG), 67–87 (VLHWINDGLMAIFFLVVGMEI), 103–123 (ILPISAAIGGMIVPAIIYALF), 132–152 (GWGIPMATDIAFALGMLSLVA), 161–181 (VFLTALAIVDDLGAIIVIAIF), 184–204 (SQISWIALLLGLIVFATLILA), 216–236 (IILGIILWICLLKSGIHATIA), 266–286 (TPWSSFVIMPIFAFANAGIII), 303–323 (IIFGLFVGKQIGIFGTSFILI), 339–359 (LYGASVFGGIGFTMSIFVSSL), and 372–392 (MCIMIASILAATYGTIVFKFI).

This sequence belongs to the NhaA Na(+)/H(+) (TC 2.A.33) antiporter family.

It localises to the cell membrane. It catalyses the reaction Na(+)(in) + 2 H(+)(out) = Na(+)(out) + 2 H(+)(in). Its function is as follows. Na(+)/H(+) antiporter that extrudes sodium in exchange for external protons. This Clostridium beijerinckii (strain ATCC 51743 / NCIMB 8052) (Clostridium acetobutylicum) protein is Na(+)/H(+) antiporter NhaA 2.